The primary structure comprises 502 residues: NAD(P)H-quinone oxidoreductase chain 4, chloroplastic (502 aa).

14 helical membrane passes run 4–24, 37–57, 87–107, 113–130, 134–154, 167–187, 213–233, 244–264, 274–294, 315–335, 336–356, 388–408, 419–439, and 464–484; these read FPWLTILVVLPIFAGSLIFFL, ISICLLEFLLMTYAFCYHFQL, LGSILLTGFITTLATLAAWPV, LFYFLMLAMYSGQIGLFS, LLLFFIMWELELIPVYLLLSM, FILYTAGGSIFFLIGVLGMGL, ILLYFGFLIAYAVKLPIIPLH, HYSTCMLLAGILLKMGAYGLI, AHYLFSPWLVIIGAIQIIYAA, MGFIIIGIGSITNIGLNGAIL, QILSHGFIGATLFFLAGTASD, LALPGMSGFVAELVVFFGLIT, LITFVMAIGMILTPIYLLSML, and LFILICIFLPVIGIGIYPDFV.

The protein belongs to the complex I subunit 4 family.

It localises to the plastid. It is found in the chloroplast thylakoid membrane. The enzyme catalyses a plastoquinone + NADH + (n+1) H(+)(in) = a plastoquinol + NAD(+) + n H(+)(out). It carries out the reaction a plastoquinone + NADPH + (n+1) H(+)(in) = a plastoquinol + NADP(+) + n H(+)(out). This Lolium perenne (Perennial ryegrass) protein is NAD(P)H-quinone oxidoreductase chain 4, chloroplastic.